The sequence spans 437 residues: tRNA-queuosine alpha-mannosyltransferase (437 aa).

It belongs to the glycosyltransferase group 1 family. Glycosyltransferase 4 subfamily.

The protein resides in the cytoplasm. Its subcellular location is the nucleus. The catalysed reaction is queuosine(34) in tRNA(Asp) + GDP-alpha-D-mannose = O-4''-alpha-D-mannosylqueuosine(34) in tRNA(Asp) + GDP + H(+). Functionally, glycosyltransferase that specifically catalyzes mannosylation of cytoplasmic tRNA(Asp) modified with queuosine at position 34 (queuosine(34)). Mannosylates the cyclopentene moiety of queuosine(34) in tRNA(Asp) to form mannosyl-queuosine(34). Mannosylation of queuosine(34) in tRNA(Asp) is required to slow-down elongation at cognate codons, GAC and GAU, thereby regulating protein translation. The chain is tRNA-queuosine alpha-mannosyltransferase (gtdc1) from Xenopus tropicalis (Western clawed frog).